The following is a 309-amino-acid chain: tRNA-cytidine(32) 2-sulfurtransferase (309 aa).

The PP-loop motif motif lies at 47–52 (SGGKDS). Residues cysteine 122, cysteine 125, and cysteine 213 each coordinate [4Fe-4S] cluster.

Belongs to the TtcA family. As to quaternary structure, homodimer. It depends on Mg(2+) as a cofactor. [4Fe-4S] cluster is required as a cofactor.

It is found in the cytoplasm. It catalyses the reaction cytidine(32) in tRNA + S-sulfanyl-L-cysteinyl-[cysteine desulfurase] + AH2 + ATP = 2-thiocytidine(32) in tRNA + L-cysteinyl-[cysteine desulfurase] + A + AMP + diphosphate + H(+). The protein operates within tRNA modification. Functionally, catalyzes the ATP-dependent 2-thiolation of cytidine in position 32 of tRNA, to form 2-thiocytidine (s(2)C32). The sulfur atoms are provided by the cysteine/cysteine desulfurase (IscS) system. The sequence is that of tRNA-cytidine(32) 2-sulfurtransferase from Erwinia tasmaniensis (strain DSM 17950 / CFBP 7177 / CIP 109463 / NCPPB 4357 / Et1/99).